A 358-amino-acid polypeptide reads, in one-letter code: Biotin synthase (358 aa).

Residues 44 to 272 form the Radical SAM core domain; that stretch reads NRVRLNYLVN…DSEVRAAAGR (229 aa). [4Fe-4S] cluster contacts are provided by C59, C63, and C66. [2Fe-2S] cluster is bound by residues C103, C136, C196, and R267.

It belongs to the radical SAM superfamily. Biotin synthase family. In terms of assembly, homodimer. [4Fe-4S] cluster serves as cofactor. Requires [2Fe-2S] cluster as cofactor.

The enzyme catalyses (4R,5S)-dethiobiotin + (sulfur carrier)-SH + 2 reduced [2Fe-2S]-[ferredoxin] + 2 S-adenosyl-L-methionine = (sulfur carrier)-H + biotin + 2 5'-deoxyadenosine + 2 L-methionine + 2 oxidized [2Fe-2S]-[ferredoxin]. The protein operates within cofactor biosynthesis; biotin biosynthesis; biotin from 7,8-diaminononanoate: step 2/2. Functionally, catalyzes the conversion of dethiobiotin (DTB) to biotin by the insertion of a sulfur atom into dethiobiotin via a radical-based mechanism. The sequence is that of Biotin synthase from Cutibacterium acnes (strain DSM 16379 / KPA171202) (Propionibacterium acnes).